Here is a 522-residue protein sequence, read N- to C-terminus: L-tyrosine/L-DOPA decarboxylase 2 (522 aa).

A run of 2 repeats spans residues 75–132 (KDVH…TELE) and 135–186 (VMDW…GREH). The interval 75–186 (KDVHDDIVPG…RILDRIGREH (112 aa)) is 2 X approximate tandem repeats. T163, C164, T258, and N312 together coordinate pyridoxal 5'-phosphate. Residue K315 is modified to N6-(pyridoxal phosphate)lysine.

This sequence belongs to the group II decarboxylase family. The cofactor is pyridoxal 5'-phosphate. As to expression, strongly expressed in all tissues, particularly in thick roots.

It carries out the reaction L-tyrosine + H(+) = tyramine + CO2. It catalyses the reaction L-dopa + H(+) = dopamine + CO2. It functions in the pathway aromatic compound metabolism. It participates in alkaloid biosynthesis. Its function is as follows. Aromatic amino acid decarboxylase participating in the biosynthesis of natural products derived from phenylethylamine, including mescaline, a natural hallucinogen potentially used in psychotherapeutic treatments. Catalyzes the decarboxylation of L-tyrosine and L-DOPA. The chain is L-tyrosine/L-DOPA decarboxylase 2 from Lophophora williamsii (Peyote).